We begin with the raw amino-acid sequence, 598 residues long: Proline--tRNA ligase (598 aa).

This sequence belongs to the class-II aminoacyl-tRNA synthetase family. ProS type 1 subfamily. In terms of assembly, homodimer.

The protein resides in the cytoplasm. It carries out the reaction tRNA(Pro) + L-proline + ATP = L-prolyl-tRNA(Pro) + AMP + diphosphate. Its function is as follows. Catalyzes the attachment of proline to tRNA(Pro) in a two-step reaction: proline is first activated by ATP to form Pro-AMP and then transferred to the acceptor end of tRNA(Pro). As ProRS can inadvertently accommodate and process non-cognate amino acids such as alanine and cysteine, to avoid such errors it has two additional distinct editing activities against alanine. One activity is designated as 'pretransfer' editing and involves the tRNA(Pro)-independent hydrolysis of activated Ala-AMP. The other activity is designated 'posttransfer' editing and involves deacylation of mischarged Ala-tRNA(Pro). The misacylated Cys-tRNA(Pro) is not edited by ProRS. The polypeptide is Proline--tRNA ligase (Rippkaea orientalis (strain PCC 8801 / RF-1) (Cyanothece sp. (strain PCC 8801))).